The chain runs to 530 residues: PC4 and SFRS1-interacting protein (530 aa).

Positions M1–N64 constitute a PWWP domain. K75 is covalently cross-linked (Glycyl lysine isopeptide (Lys-Gly) (interchain with G-Cter in SUMO2)). The tract at residues P88–D349 is disordered. Positions S93–D107 are enriched in low complexity. 3 positions are modified to phosphoserine: S102, S105, and S106. Positions K113–K135 are enriched in basic and acidic residues. T115 and T122 each carry phosphothreonine. A Phosphoserine modification is found at S129. T141 carries the phosphothreonine modification. The span at A144–A153 shows a compositional bias: basic residues. A Nuclear localization signal motif is present at residues R146–Q156. Position 167 is a phosphothreonine (T167). 2 positions are modified to phosphoserine: S177 and S206. The span at E213 to R261 shows a compositional bias: basic and acidic residues. S271 bears the Phosphoserine mark. Phosphothreonine is present on T272. A phosphoserine mark is found at S273 and S275. A compositionally biased stretch (acidic residues) spans D274 to E283. Residues K287–M302 are compositionally biased toward basic residues. Basic and acidic residues predominate over residues G305–D349. Coiled coils occupy residues Q306–K334 and N371–E395. Positions V340–T417 are integrase-binding domain (IBD). S434 is subject to Phosphoserine. A Phosphothreonine modification is found at T437. S443 carries the phosphoserine modification. A compositionally biased stretch (basic and acidic residues) spans E446 to T473. Residues E446–N530 are disordered. Over residues G474–G494 the composition is skewed to polar residues. The segment covering E498–N530 has biased composition (basic and acidic residues). S514 carries the post-translational modification Phosphoserine. R517 is subject to Citrulline. The residue at position 522 (S522) is a Phosphoserine. Position 527 is a phosphothreonine (T527).

Belongs to the HDGF family. Monomer. Interacts with IFRD1/PC4. Interacts (via IBD domain) with POGZ (via IBM motif) and CDCA7L (via IBM motifs). Interacts (via IBD domain) with KMT2A (via IBM motifs) with a moderate affinity whereas interacts with the KMT2A-MEN1 complex with a greater affinity; MEN1 enhances interaction of KMT2A with PSIP1. Interacts (via IBD domain) with IWS1 (via IBM motif), MED1 (via IBM motif) and DBF4 (via IBM motifs). Citrullinated by PADI4.

Its subcellular location is the nucleus. Transcriptional coactivator involved in neuroepithelial stem cell differentiation and neurogenesis. Involved in particular in lens epithelial cell gene regulation and stress responses. May play an important role in lens epithelial to fiber cell terminal differentiation. May play a protective role during stress-induced apoptosis. The polypeptide is PC4 and SFRS1-interacting protein (PSIP1) (Bos taurus (Bovine)).